The chain runs to 364 residues: Transcription factor SPEECHLESS (364 aa).

The tract at residues 35 to 109 (GEISPTAAST…QKMSHVTVER (75 aa)) is disordered. Serine 38 bears the Phosphoserine; by ASK7 mark. Threonine 40 is subject to Phosphothreonine; by ASK7. A compositionally biased stretch (polar residues) spans 40-53 (TAASTPKDGTTSSK). At serine 43 the chain carries Phosphoserine; by ASK7. Threonine 44 carries the phosphothreonine; by ASK7 modification. Serine 65 carries the phosphoserine; by ASK7 modification. Over residues 79-92 (EDEEEEDGDGEAEE) the composition is skewed to acidic residues. The interval 99–112 (QQKMSHVTVERNRR) is basic motif. The 52-residue stretch at 99 to 150 (QQKMSHVTVERNRRKQMNEHLTVLRSLMPCFYVKRGDQASIIGGVVEYISEL) folds into the bHLH domain. A helix-loop-helix motif region spans residues 113–150 (KQMNEHLTVLRSLMPCFYVKRGDQASIIGGVVEYISEL). The residue at position 171 (serine 171) is a Phosphoserine; by ASK7. Residues 171–227 (SPRVVPSPRPSPPVLSPRKPPLSPRINHHQIHHHLLLPPISPRTPQPTSPYRAIPPQ) are disordered. Over residues 175–193 (VPSPRPSPPVLSPRKPPLS) the composition is skewed to pro residues. Residue serine 177 is modified to Phosphoserine; by ASK7, MPK3 and MPK6. A Phosphoserine; by ASK7 modification is found at serine 181. Position 186 is a phosphoserine; by CDKA-1, ASK7, MPK3 and MPK6 (serine 186). Serine 193 is modified (phosphoserine; by MPK3 and MPK6). Residues 196-205 (INHHQIHHHL) are compositionally biased toward basic residues. A compositionally biased stretch (pro residues) spans 209 to 218 (PISPRTPQPT). Serine 211 bears the Phosphoserine; by MPK3 and MPK6 mark. A Phosphothreonine; by ASK7, MPK3 and MPK6 modification is found at threonine 214. The residue at position 219 (serine 219) is a Phosphoserine; by ASK7, MPK3 and MPK6.

Homodimer. Forms dimers with SCRM and SCRM2. May interact with CDKA-1. Post-translationally, phosphorylated by ASK7/BIN2 and ASK3/SK12; this post-translational modification inhibits activity and limit epidermal cell proliferation. Phosphorylation by MPK3 and MPK6 leads to the inhibition of stomatal fate and to degradation. Stabilized by CDKA-1-mediated phosphorylation at Ser-186 which promotes stomatal development. As to expression, expressed in developing leaf epidermis. Reduced accumulation in the stomatal lineage ground cells (SLGCs) where BASL is polarized in the cell cortex. Observed in small cells of non-protruding hypocotyl cell files and of developing cotyledon epidermis. Restricted to meristemoids (stomatal precursor cell) in leaves epidermis, mostly in dividing cells of non-protruding cell files.

The protein localises to the nucleus. Its activity is regulated as follows. Negatively regulated through phosphorylation by the MAPK module. Activity is constrained by polarized BASL in stomatal lineage ground cells (SLGCs) undergoing ACD. Its function is as follows. Transcription factor acting as an integration node for stomata and brassinosteroid (BR) signaling pathways to control stomatal initiation and development. Activates transcription when in the presence of SCRM/ICE1. Functions as a dimer with SCRM or SCRM2 during stomatal initiation. Required for the initiation, the spacing and the formation of stomata, by promoting the first asymmetric cell divisions. Together with FMA and MUTE, modulates the stomata formation. Involved in the regulation of growth reduction under osmotic stress (e.g. mannitol), associated with a quick decrease of meristemoid mother cells (MMCs) number lower stomatal index and density. The protein is Transcription factor SPEECHLESS of Arabidopsis thaliana (Mouse-ear cress).